A 145-amino-acid polypeptide reads, in one-letter code: LIM domain only protein 3 (145 aa).

LIM zinc-binding domains lie at 11 to 73 (KGCA…LFGT) and 75 to 137 (GNCA…GLMK).

This Rattus norvegicus (Rat) protein is LIM domain only protein 3 (Lmo3).